Here is a 322-residue protein sequence, read N- to C-terminus: Ferrochelatase (322 aa).

Fe cation contacts are provided by histidine 194 and glutamate 275.

The protein belongs to the ferrochelatase family.

It is found in the cytoplasm. It catalyses the reaction heme b + 2 H(+) = protoporphyrin IX + Fe(2+). The protein operates within porphyrin-containing compound metabolism; protoheme biosynthesis; protoheme from protoporphyrin-IX: step 1/1. Its function is as follows. Catalyzes the ferrous insertion into protoporphyrin IX. The protein is Ferrochelatase of Proteus mirabilis (strain HI4320).